The sequence spans 465 residues: Pre-mRNA-splicing factor URN1 (465 aa).

Residues 1-32 (MRGEWQEFKTPAGKKYYYNKNTKQSRWEKPNL) enclose the WW domain. 3 disordered regions span residues 28–49 (EKPN…QTER), 144–198 (ERKD…VNQD), and 266–288 (ERSG…DSEV). At Ser-150 the chain carries Phosphoserine. The segment covering 160 to 175 (LQESHTGLVSGYGSSS) has biased composition (polar residues). Positions 176-192 (GEEDEEEDEEEDEENEE) are enriched in acidic residues. Residues 212-266 (DIDERNIFFELFDRYKLDKFSTWSLQSKKIENDPDFYKIRDDTVRESLFEEWCGE) form the FF domain. Positions 274 to 288 (EESDSEDNSEDDSEV) are enriched in acidic residues.

In terms of assembly, component of the precatalytic spliceosomal complex B. Interacts with PRP19.

It is found in the nucleus. Functionally, component of the spliceosome involved in mRNA processing. The sequence is that of Pre-mRNA-splicing factor URN1 (URN1) from Saccharomyces cerevisiae (strain ATCC 204508 / S288c) (Baker's yeast).